Here is a 290-residue protein sequence, read N- to C-terminus: MASLKDMRVRIASTKATQKITKAMQMVAASKLRRAQTAAEAARPYADKMSAVISNIAGAAAGSPGAPALLAGTGRDQVHLLLVCTGERGLSGAFNSSIVRLARERALALMAQGKEVKFFCVGRKGYEQLRRQFDKQIVEHLDLRSVRQLGFVNAEDIAKKVLARFEAGEFDVCTLFYSRFRSVIAQIPTAQQIIPLVVEEGTAASTTSYEYEPEEDEILTRLLPRNLAVQIFRALLENNASFYGAQMSAMDNATRNAGEMIRKQTLVYNRTRQAQITKELIEIISGAEAV.

The protein belongs to the ATPase gamma chain family. In terms of assembly, F-type ATPases have 2 components, CF(1) - the catalytic core - and CF(0) - the membrane proton channel. CF(1) has five subunits: alpha(3), beta(3), gamma(1), delta(1), epsilon(1). CF(0) has three main subunits: a, b and c.

Its subcellular location is the cell inner membrane. Produces ATP from ADP in the presence of a proton gradient across the membrane. The gamma chain is believed to be important in regulating ATPase activity and the flow of protons through the CF(0) complex. The protein is ATP synthase gamma chain of Bradyrhizobium diazoefficiens (strain JCM 10833 / BCRC 13528 / IAM 13628 / NBRC 14792 / USDA 110).